The sequence spans 318 residues: NADH-ubiquinone oxidoreductase chain 1 (318 aa).

Transmembrane regions (helical) follow at residues 2-22, 70-90, 100-120, 147-167, 172-192, 222-242, 253-273, and 294-314; these read FMIN…FLTL, MFIL…IPLP, LGVL…LWSG, AIIL…TLII, TWLI…TLAE, LFFM…AILF, ELYT…FLWI, and LPLT…TSGI.

It belongs to the complex I subunit 1 family. Core subunit of respiratory chain NADH dehydrogenase (Complex I) which is composed of 45 different subunits.

It is found in the mitochondrion inner membrane. It catalyses the reaction a ubiquinone + NADH + 5 H(+)(in) = a ubiquinol + NAD(+) + 4 H(+)(out). Core subunit of the mitochondrial membrane respiratory chain NADH dehydrogenase (Complex I) which catalyzes electron transfer from NADH through the respiratory chain, using ubiquinone as an electron acceptor. Essential for the catalytic activity and assembly of complex I. The polypeptide is NADH-ubiquinone oxidoreductase chain 1 (MT-ND1) (Bos mutus grunniens (Wild yak)).